The sequence spans 94 residues: Protein translocase subunit SecE (94 aa).

Positions 1–32 are disordered; that stretch reads MTDAVGSIDMPDAQDEAPDSKKSRKGGKRGKK. Residues 22–32 are compositionally biased toward basic residues; it reads KSRKGGKRGKK. The chain crosses the membrane as a helical span at residues 65 to 85; the sequence is TVVIIFVVIMIGLVTLIDYGF.

Belongs to the SecE/SEC61-gamma family. In terms of assembly, component of the Sec protein translocase complex. Heterotrimer consisting of SecY, SecE and SecG subunits. The heterotrimers can form oligomers, although 1 heterotrimer is thought to be able to translocate proteins. Interacts with the ribosome. Interacts with SecDF, and other proteins may be involved. Interacts with SecA.

Its subcellular location is the cell membrane. In terms of biological role, essential subunit of the Sec protein translocation channel SecYEG. Clamps together the 2 halves of SecY. May contact the channel plug during translocation. This Streptomyces lividans protein is Protein translocase subunit SecE.